We begin with the raw amino-acid sequence, 384 residues long: DNA dC-&gt;dU-editing enzyme APOBEC-3G (384 aa).

Residues 1-60 (MKPHFRNPVERMYQDTFSDNFYNRPILSHRNTVWLCYEVKTKGPSRPPLDAKIFRGQVYS) are essential for cytoplasmic localization. 2 CMP/dCMP-type deaminase domains span residues 29 to 138 (HRNT…LRSL) and 214 to 328 (GRHE…LRTL). T32 carries the phosphothreonine; by PKA modification. Zn(2+) is bound by residues H65, C97, and C100. A necessary for homooligomerization region spans residues 209–336 (ELWVRGRHET…TLAKAGAKIS (128 aa)). The interaction with DNA stretch occupies residues 213–215 (RGR). Residue T218 is modified to Phosphothreonine; by PKA and CAMK2. H257 provides a ligand contact to Zn(2+). E259 acts as the Proton donor in catalysis. C288 and C291 together coordinate Zn(2+). The segment at 313-320 (RIYDDQGR) is interaction with DNA.

It belongs to the cytidine and deoxycytidylate deaminase family. As to quaternary structure, homodimer. Homooligomer. Can bind RNA to form ribonucleoprotein complexes of high-molecular-mass (HMM) or low-molecular-mass (LMM). HMM is inactive and heterogeneous in protein composition because of binding nonselectively to cellular RNAs, which in turn are associated with variety of cellular proteins. The LMM form which is enzymatically active has few or no RNAs associated. Its ability to form homooligomer is distinct from its ability to assemble into HMM. Interacts with APOBEC3B, APOBEC3F, MOV10, AGO2, EIF4E, EIF4ENIF1, DCP2 and DDX6 in an RNA-dependent manner. Interacts with AGO1, AGO3 and PKA/PRKACA. The cofactor is Zn(2+).

Its subcellular location is the cytoplasm. The protein resides in the nucleus. It localises to the P-body. It carries out the reaction a 2'-deoxycytidine in single-stranded DNA + H2O + H(+) = a 2'-deoxyuridine in single-stranded DNA + NH4(+). Functionally, DNA deaminase (cytidine deaminase) which acts as an inhibitor of retrovirus replication and retrotransposon mobility via deaminase-dependent and -independent mechanisms. Exhibits antiviral activity against vif-deficient: HIV-1 and simian immunodeficiency viruses (SIVs) and also against simian foamy virus (SFV). After the penetration of retroviral nucleocapsids into target cells of infection and the initiation of reverse transcription, it can induce the conversion of cytosine to uracil in the minus-sense single-strand viral DNA, leading to G-to-A hypermutations in the subsequent plus-strand viral DNA. The resultant detrimental levels of mutations in the proviral genome, along with a deamination-independent mechanism that works prior to the proviral integration, together exert efficient antiretroviral effects in infected target cells. Selectively targets single-stranded DNA and does not deaminate double-stranded DNA or single- or double-stranded RNA. May inhibit the mobility of LTR retrotransposons. The protein is DNA dC-&gt;dU-editing enzyme APOBEC-3G (APOBEC3G) of Pan troglodytes (Chimpanzee).